The sequence spans 438 residues: Enolase (438 aa).

H159 and E168 together coordinate substrate. The active-site Proton donor is E211. D246, E297, and D322 together coordinate Mg(2+). Residues E297 and D322 each contribute to the substrate site. The active-site Proton acceptor is the K347. Residues 374 to 377 (SHRS) and K398 each bind substrate.

It belongs to the enolase family. In terms of assembly, homodimer. It depends on Mg(2+) as a cofactor.

It is found in the cytoplasm. The catalysed reaction is (2R)-2-phosphoglycerate = phosphoenolpyruvate + H2O. It functions in the pathway carbohydrate degradation; glycolysis; pyruvate from D-glyceraldehyde 3-phosphate: step 4/5. Functionally, involved in osmoadaptation. The chain is Enolase (enoA) from Emericella nidulans (strain FGSC A4 / ATCC 38163 / CBS 112.46 / NRRL 194 / M139) (Aspergillus nidulans).